The sequence spans 35 residues: MSDINATRLPIVGILGLPCIGDDVNSTLTHGEDLC.

A propeptide spanning residues 1–10 (MSDINATRLP) is cleaved from the precursor. The segment at residues 11–18 (IVGILGLP) is a cross-link (cyclopeptide (Ile-Pro)). Positions 19-35 (CIGDDVNSTLTHGEDLC) are excised as a propeptide.

This sequence belongs to the MSDIN fungal toxin family. Post-translationally, processed by the macrocyclase-peptidase enzyme POPB to yield a cyclic decapeptide. POPB first removes 10 residues from the N-terminus. Conformational trapping of the remaining peptide forces the enzyme to release this intermediate rather than proceed to macrocyclization. The enzyme rebinds the remaining peptide in a different conformation and catalyzes macrocyclization of the N-terminal 8 residues.

Functionally, cyclic octapeptide that belongs to the MSDIN-like toxin family responsible for a large number of food poisoning cases and deaths. Cycloaminide E is structurally related to other cycloamanides that are non-toxic to mammals but show immunosuppressive activity. The sequence is that of Cycloamanide F proprotein from Amanita phalloides (Death cap).